Here is a 136-residue protein sequence, read N- to C-terminus: Large ribosomal subunit protein uL16 (136 aa).

This sequence belongs to the universal ribosomal protein uL16 family. As to quaternary structure, part of the 50S ribosomal subunit.

In terms of biological role, binds 23S rRNA and is also seen to make contacts with the A and possibly P site tRNAs. The protein is Large ribosomal subunit protein uL16 of Hamiltonella defensa subsp. Acyrthosiphon pisum (strain 5AT).